The primary structure comprises 343 residues: GTP 3',8-cyclase (343 aa).

The 226-residue stretch at 19–244 (PYGRTISYLR…TDVDDSTGGP (226 aa)) folds into the Radical SAM core domain. Arg-28 is a GTP binding site. [4Fe-4S] cluster is bound by residues Cys-35 and Cys-39. Residue Tyr-41 participates in S-adenosyl-L-methionine binding. Cys-42 is a [4Fe-4S] cluster binding site. Arg-77 is a GTP binding site. Position 81 (Gly-81) interacts with S-adenosyl-L-methionine. Thr-111 provides a ligand contact to GTP. An S-adenosyl-L-methionine-binding site is contributed by Ser-135. A GTP-binding site is contributed by Lys-171. Residue Met-205 participates in S-adenosyl-L-methionine binding. 2 residues coordinate [4Fe-4S] cluster: Cys-268 and Cys-271. 273–275 (RVR) contributes to the GTP binding site. Cys-285 is a [4Fe-4S] cluster binding site.

The protein belongs to the radical SAM superfamily. MoaA family. As to quaternary structure, monomer and homodimer. It depends on [4Fe-4S] cluster as a cofactor.

The enzyme catalyses GTP + AH2 + S-adenosyl-L-methionine = (8S)-3',8-cyclo-7,8-dihydroguanosine 5'-triphosphate + 5'-deoxyadenosine + L-methionine + A + H(+). It functions in the pathway cofactor biosynthesis; molybdopterin biosynthesis. In terms of biological role, catalyzes the cyclization of GTP to (8S)-3',8-cyclo-7,8-dihydroguanosine 5'-triphosphate. The protein is GTP 3',8-cyclase of Nitrobacter hamburgensis (strain DSM 10229 / NCIMB 13809 / X14).